The primary structure comprises 273 residues: Outer surface protein A (273 aa).

The signal sequence occupies residues Met-1–Ala-16. Cys-17 is lipidated: N-palmitoyl cysteine. A lipid anchor (S-diacylglycerol cysteine) is attached at Cys-17.

This sequence belongs to the OspA lipoprotein family.

Its subcellular location is the cell outer membrane. It localises to the cell surface. Functionally, induces host (human and mouse) cytokine release by monocyte cell lines via TLR2 and CD14; nonlipidated protein does not stimulate host cells. This chain is Outer surface protein A, found in Borreliella burgdorferi (strain ATCC 35210 / DSM 4680 / CIP 102532 / B31) (Borrelia burgdorferi).